A 113-amino-acid polypeptide reads, in one-letter code: Ig heavy chain V-III region U61 (113 aa).

The region spanning 1-113 (EVKLEESGGG…YWGQGTLVPV (113 aa)) is the Ig-like domain. C22 and C98 form a disulfide bridge.

In Mus musculus (Mouse), this protein is Ig heavy chain V-III region U61.